Here is a 353-residue protein sequence, read N- to C-terminus: UPF0283 membrane protein Spro_2618 (353 aa).

The next 3 membrane-spanning stretches (helical) occupy residues methionine 71 to valine 91, isoleucine 101 to valine 121, and glutamate 214 to tryptophan 234.

It belongs to the UPF0283 family.

It is found in the cell inner membrane. The sequence is that of UPF0283 membrane protein Spro_2618 from Serratia proteamaculans (strain 568).